Consider the following 446-residue polypeptide: Iroquois homeobox protein 5a (446 aa).

The homeobox DNA-binding region spans 117–173; sequence NATRDATATLKAWLNEHRKNPYPTKGEKIMLAIITKMTLTQVSTWFANARRRLKKEN. The disordered stretch occupies residues 175 to 312; sequence MTWTPRNRSE…IHSPPSAPKP (138 aa). Acidic residues predominate over residues 184 to 201; the sequence is EDEEEDENIDLEKNDDDE. Basic and acidic residues-rich tracts occupy residues 202–220 and 227–258; these read PNKP…DHKL and PCDR…RTDL. 2 stretches are compositionally biased toward polar residues: residues 264–274 and 293–303; these read KPTTSSPSVLQ and STGNSNVTSVI.

Belongs to the TALE/IRO homeobox family.

Its subcellular location is the nucleus. In terms of biological role, transcription factor. Binds to consensus iroquois binding site (IBS) motifs 5'-ACANNTGT-3' or 5'-ACANNNTGT-3' in regulatory elements of target genes. Required, together with irx7, for hyoid joint formation; they act cell autonomously to repress expression of cartilage matrix genes, such as collagen col2a1a, within immature chondrocytes of the joint interzone. May compete with or modify Sox9a activity, thereby reducing Sox9a-mediated activation of col2a1a. Probably acts in the developing hyoid joint downstream of Bmp signaling. In concert with irx6a, plays a role in visual performance. The chain is Iroquois homeobox protein 5a (irx5a) from Danio rerio (Zebrafish).